The chain runs to 659 residues: Interferon-induced GTP-binding protein Mx1 (659 aa).

Met-1 carries the N-acetylmethionine modification. The tract at residues 1–40 (MVNSKGEITDSDPGSNHLLLNGLPDKAGKNQDTEPENSLC) is disordered. The 274-residue stretch at 65–338 (DLALPAIAVI…LITHICKTLP (274 aa)) folds into the Dynamin-type G domain. The tract at residues 75 to 82 (GDQSSGKS) is G1 motif. GTP is bound at residue 75–82 (GDQSSGKS). Residues 100 to 102 (VTR) form a G2 motif region. Residues 176–179 (DLPG) form a G3 motif region. GTP contacts are provided by residues 176–180 (DLPGI) and 245–248 (TKPD). The segment at 245-248 (TKPD) is G4 motif. Residues 277-280 (KCRG) are G5 motif. Residues 339–364 (LLENQIKENHEKITEELKKYGSDVPE) form a bundle signaling element (BSE) region. A middle domain region spans residues 364-531 (EEEHEKMFFL…HFQMEQIVYC (168 aa)). Residues 365-629 (EEHEKMFFLI…KDTYNWLLKE (265 aa)) form a stalk region. The critical for lipid-binding stretch occupies residues 552 to 555 (KNKK). The GED domain maps to 571 to 659 (LSEIFEHLLA…ARRRLAKFPG (89 aa)).

This sequence belongs to the TRAFAC class dynamin-like GTPase superfamily. Dynamin/Fzo/YdjA family. Homooligomer. Oligomerizes into multimeric filamentous or ring-like structures by virtue of its stalk domain. Oligomerization is critical for GTPase activity, protein stability, and recognition of viral target structures. Interacts with TRPC1, TRPC3, TRPC4, TRPC5, TRPC6 and TRPC7. Interacts with HSPA5. Interacts with TUBB/TUBB5. Interacts with DDX39A and DDX39B. Post-translationally, ISGylated.

The protein localises to the cytoplasm. It is found in the endoplasmic reticulum membrane. The protein resides in the perinuclear region. Its function is as follows. Interferon-induced dynamin-like GTPase with antiviral activity. This chain is Interferon-induced GTP-binding protein Mx1 (MX1), found in Phoca vitulina (Harbor seal).